The sequence spans 1032 residues: Connector enhancer of kinase suppressor of ras 2 (1032 aa).

Positions tryptophan 11–leucine 76 constitute an SAM domain. Serine 12 carries the post-translational modification Phosphoserine. The CRIC domain maps to asparagine 84–tyrosine 178. In terms of domain architecture, PDZ spans valine 215–proline 297. Low complexity predominate over residues arginine 324–proline 340. Residues arginine 324–glutamine 349 form a disordered region. A DUF1170 domain is found at threonine 332 to leucine 515. Phosphoserine occurs at positions 338 and 390. A disordered region spans residues glutamate 480–tyrosine 509. In terms of domain architecture, PH spans arginine 570 to alanine 669. The segment at aspartate 682 to arginine 766 is disordered. A Phosphotyrosine modification is found at tyrosine 683. A compositionally biased stretch (acidic residues) spans tyrosine 683–aspartate 693. 2 positions are modified to phosphoserine: serine 685 and serine 687. Residues aspartate 701–proline 714 are compositionally biased toward pro residues. The segment covering leucine 730–serine 740 has biased composition (low complexity). 2 positions are modified to phosphoserine: serine 756 and serine 767. The disordered stretch occupies residues aspartate 866 to glutamate 900. Positions proline 874–alanine 917 form a coiled coil. Residues glutamate 875–alanine 888 show a composition bias toward acidic residues. Serine 906 carries the phosphoserine modification.

This sequence belongs to the CNKSR family. As to quaternary structure, interacts with RAF1, RAB2L and RAL GTPase proteins. Interacts with DLG4 and AIP1. In terms of processing, phosphorylated on tyrosine. Expressed in neurons and localized in the cell body and neurites.

It is found in the cytoplasm. Its subcellular location is the membrane. Functionally, may function as an adapter protein or regulator of Ras signaling pathways, in synaptic junctions. The protein is Connector enhancer of kinase suppressor of ras 2 (Cnksr2) of Rattus norvegicus (Rat).